A 352-amino-acid chain; its full sequence is Divinyl chlorophyll a/b light-harvesting protein PcbH (352 aa).

Transmembrane regions (helical) follow at residues 27–47 (FIGS…ASCL), 88–108 (VATI…AGLA), 140–160 (FILG…VEWA), 202–222 (VMSG…FHIA), 242–262 (AVLS…AFWA), and 309–329 (LVNV…WHAL).

The protein belongs to the PsbB/PsbC family. IsiA/Pcb subfamily. As to quaternary structure, the antenna complex consists of divinyl chlorophylls (a and b) and divinyl chlorophyll a/b binding proteins and binds more divinyl chlorophyll b than does the antenna complex from high-light-adapted Prochlorococcus. The cofactor is divinyl chlorophyll a. Divinyl chlorophyll b is required as a cofactor.

It localises to the cellular thylakoid membrane. Its function is as follows. The antenna complex functions as a light receptor, it captures and delivers excitation energy to photosystems II and I. The Prochlorales pcb genes are not related to higher plant LHCs. The chain is Divinyl chlorophyll a/b light-harvesting protein PcbH (pcbH) from Prochlorococcus marinus (strain SARG / CCMP1375 / SS120).